The chain runs to 162 residues: UPF0262 protein Acry_0160 (162 aa).

The protein belongs to the UPF0262 family.

This is UPF0262 protein Acry_0160 from Acidiphilium cryptum (strain JF-5).